The primary structure comprises 255 residues: 5'-nucleotidase SurE (255 aa).

Positions 8, 9, 40, and 92 each coordinate a divalent metal cation.

It belongs to the SurE nucleotidase family. The cofactor is a divalent metal cation.

It localises to the cytoplasm. It carries out the reaction a ribonucleoside 5'-phosphate + H2O = a ribonucleoside + phosphate. Functionally, nucleotidase that shows phosphatase activity on nucleoside 5'-monophosphates. In Brucella canis (strain ATCC 23365 / NCTC 10854 / RM-666), this protein is 5'-nucleotidase SurE.